We begin with the raw amino-acid sequence, 122 residues long: uncharacterized protein (122 aa).

Residues N79–R90 are compositionally biased toward polar residues. The segment at N79–K122 is disordered. Residues E94–K122 show a composition bias toward low complexity.

This is an uncharacterized protein from Leptolyngbya boryana (Plectonema boryanum).